Consider the following 512-residue polypeptide: Glutathione-binding protein GsiB (512 aa).

A signal peptide spans 1–26 (MARAVHRSGLVALGIVTALMASCAFA).

The protein belongs to the bacterial solute-binding protein 5 family. As to quaternary structure, the complex is composed of two ATP-binding proteins (GsiA), two transmembrane proteins (GsiC and GsiD) and a solute-binding protein (GsiB).

It is found in the periplasm. Part of the ABC transporter complex GsiABCD involved in glutathione import. Binds glutathione. The polypeptide is Glutathione-binding protein GsiB (Shigella dysenteriae serotype 1 (strain Sd197)).